The primary structure comprises 184 residues: Potassium-transporting ATPase KdpC subunit (184 aa).

The helical transmembrane segment at 6 to 26 (TAVLYTIISAVFLGLGYPLIM) threads the bilayer.

Belongs to the KdpC family. The system is composed of three essential subunits: KdpA, KdpB and KdpC.

The protein localises to the cell inner membrane. In terms of biological role, part of the high-affinity ATP-driven potassium transport (or Kdp) system, which catalyzes the hydrolysis of ATP coupled with the electrogenic transport of potassium into the cytoplasm. This subunit acts as a catalytic chaperone that increases the ATP-binding affinity of the ATP-hydrolyzing subunit KdpB by the formation of a transient KdpB/KdpC/ATP ternary complex. The polypeptide is Potassium-transporting ATPase KdpC subunit (Acidobacterium capsulatum (strain ATCC 51196 / DSM 11244 / BCRC 80197 / JCM 7670 / NBRC 15755 / NCIMB 13165 / 161)).